The sequence spans 166 residues: EndA-like protein (166 aa).

The protein belongs to the tRNA-intron endonuclease family. Archaeal short subfamily.

In Methanopyrus kandleri (strain AV19 / DSM 6324 / JCM 9639 / NBRC 100938), this protein is EndA-like protein.